Reading from the N-terminus, the 446-residue chain is tRNA modification GTPase MnmE (446 aa).

Residues arginine 24, glutamate 81, and lysine 120 each coordinate (6S)-5-formyl-5,6,7,8-tetrahydrofolate. Residues 216–368 enclose the TrmE-type G domain; the sequence is GLHAVLIGPP…LHIRLRELAL (153 aa). Asparagine 226 serves as a coordination point for K(+). Residues 226-231, 245-251, and 270-273 contribute to the GTP site; these read NAGKSS, TDVAGTT, and DTAG. Serine 230 is a Mg(2+) binding site. Residues threonine 245, valine 247, and threonine 250 each coordinate K(+). Threonine 251 is a Mg(2+) binding site. Lysine 446 is a binding site for (6S)-5-formyl-5,6,7,8-tetrahydrofolate.

Belongs to the TRAFAC class TrmE-Era-EngA-EngB-Septin-like GTPase superfamily. TrmE GTPase family. In terms of assembly, homodimer. Heterotetramer of two MnmE and two MnmG subunits. K(+) is required as a cofactor.

The protein resides in the cytoplasm. Functionally, exhibits a very high intrinsic GTPase hydrolysis rate. Involved in the addition of a carboxymethylaminomethyl (cmnm) group at the wobble position (U34) of certain tRNAs, forming tRNA-cmnm(5)s(2)U34. This chain is tRNA modification GTPase MnmE, found in Xanthomonas oryzae pv. oryzae (strain MAFF 311018).